We begin with the raw amino-acid sequence, 67 residues long: UPF0253 protein VS_2370 (67 aa).

It belongs to the UPF0253 family.

This chain is UPF0253 protein VS_2370, found in Vibrio atlanticus (strain LGP32) (Vibrio splendidus (strain Mel32)).